The following is a 261-amino-acid chain: Leucine-rich repeat-containing protein 18 (261 aa).

LRR repeat units follow at residues 28–49, 51–72, 74–95, 97–118, 122–144, 145–167, and 168–189; these read GKKRLDLSKMGITTFPKCILRL, DMDELDLSRNLIRKIPDSISKF, NLRWLDLHSNYIDKLPESIGQM, SLLYLNVSNNRLTSNGLPVELK, NIRAVNLGLNHLDSVPTTLGALK, ELHEVGLHDNLLNNIPVSISKLP, and KLKKLNIKRNPFPKPGESEIFI.

The protein resides in the cytoplasm. Functionally, may be involved in the regulation of spermatogenesis and sperm maturation. The polypeptide is Leucine-rich repeat-containing protein 18 (LRRC18) (Homo sapiens (Human)).